The primary structure comprises 154 residues: Fimbrial protein (154 aa).

Residues 1–6 constitute a propeptide, leader sequence; the sequence is MNAQKG. F7 carries the post-translational modification N-methylphenylalanine. A helical membrane pass occupies residues 7–29; that stretch reads FTLIELMIVIAIIGILAAIALPA.

Belongs to the N-Me-Phe pilin family. The pili are polar flexible filaments of about 5.4 nanometers diameter and 2.5 micrometers average length; they consist of only a single polypeptide chain arranged in a helical configuration of five subunits per turn in the assembled pilus.

The protein resides in the fimbrium. It localises to the membrane. This Moraxella nonliquefaciens protein is Fimbrial protein (tfpA).